We begin with the raw amino-acid sequence, 377 residues long: Queuine tRNA-ribosyltransferase (377 aa).

The active-site Proton acceptor is aspartate 89. Substrate is bound by residues 89–93 (DSGGF), aspartate 143, glutamine 187, and glycine 214. Positions 245-251 (GVGKPED) are RNA binding. The active-site Nucleophile is aspartate 264. Residues 269–273 (TRNAR) form an RNA binding; important for wobble base 34 recognition region. Zn(2+)-binding residues include cysteine 302, cysteine 304, cysteine 307, and histidine 333.

This sequence belongs to the queuine tRNA-ribosyltransferase family. As to quaternary structure, homodimer. Within each dimer, one monomer is responsible for RNA recognition and catalysis, while the other monomer binds to the replacement base PreQ1. Zn(2+) is required as a cofactor.

The catalysed reaction is 7-aminomethyl-7-carbaguanine + guanosine(34) in tRNA = 7-aminomethyl-7-carbaguanosine(34) in tRNA + guanine. It functions in the pathway tRNA modification; tRNA-queuosine biosynthesis. Catalyzes the base-exchange of a guanine (G) residue with the queuine precursor 7-aminomethyl-7-deazaguanine (PreQ1) at position 34 (anticodon wobble position) in tRNAs with GU(N) anticodons (tRNA-Asp, -Asn, -His and -Tyr). Catalysis occurs through a double-displacement mechanism. The nucleophile active site attacks the C1' of nucleotide 34 to detach the guanine base from the RNA, forming a covalent enzyme-RNA intermediate. The proton acceptor active site deprotonates the incoming PreQ1, allowing a nucleophilic attack on the C1' of the ribose to form the product. After dissociation, two additional enzymatic reactions on the tRNA convert PreQ1 to queuine (Q), resulting in the hypermodified nucleoside queuosine (7-(((4,5-cis-dihydroxy-2-cyclopenten-1-yl)amino)methyl)-7-deazaguanosine). The polypeptide is Queuine tRNA-ribosyltransferase (Shewanella denitrificans (strain OS217 / ATCC BAA-1090 / DSM 15013)).